The sequence spans 254 residues: Trans-aconitate 2-methyltransferase (254 aa).

The protein belongs to the methyltransferase superfamily. Tam family.

It is found in the cytoplasm. The enzyme catalyses trans-aconitate + S-adenosyl-L-methionine = (E)-3-(methoxycarbonyl)pent-2-enedioate + S-adenosyl-L-homocysteine. Its function is as follows. Catalyzes the S-adenosylmethionine monomethyl esterification of trans-aconitate. The protein is Trans-aconitate 2-methyltransferase of Rhodococcus jostii (strain RHA1).